The primary structure comprises 261 residues: Zinc finger protein 664 (261 aa).

9 C2H2-type zinc fingers span residues Tyr-3–His-25, His-31–His-53, Tyr-59–His-81, Tyr-87–His-109, Tyr-115–His-137, Phe-143–His-165, Tyr-171–His-193, Tyr-199–His-221, and Phe-227–His-249. Residue Lys-257 forms a Glycyl lysine isopeptide (Lys-Gly) (interchain with G-Cter in SUMO2) linkage.

Belongs to the krueppel C2H2-type zinc-finger protein family. In terms of tissue distribution, expressed in the organ of Corti, stria vascularis, auditory nerve and retina. Lower levels in the tongue, cerebellum, small intestine and kidney.

It is found in the nucleus. Its function is as follows. May be involved in transcriptional regulation. This Cavia porcellus (Guinea pig) protein is Zinc finger protein 664 (ZNF664).